The primary structure comprises 222 residues: Ribosomal RNA small subunit methyltransferase G (222 aa).

S-adenosyl-L-methionine contacts are provided by residues G85, L90, 108–110 (DAT), 136–137 (VE), and R150.

The protein belongs to the methyltransferase superfamily. RNA methyltransferase RsmG family.

The protein resides in the cytoplasm. In terms of biological role, specifically methylates the N7 position of a guanine in 16S rRNA. The sequence is that of Ribosomal RNA small subunit methyltransferase G from Chlorobium phaeobacteroides (strain DSM 266 / SMG 266 / 2430).